The sequence spans 278 residues: Putative pyruvate, phosphate dikinase regulatory protein (278 aa).

ADP is bound at residue 156–163 (GVSRTSKT).

Belongs to the pyruvate, phosphate/water dikinase regulatory protein family. PDRP subfamily.

It carries out the reaction N(tele)-phospho-L-histidyl/L-threonyl-[pyruvate, phosphate dikinase] + ADP = N(tele)-phospho-L-histidyl/O-phospho-L-threonyl-[pyruvate, phosphate dikinase] + AMP + H(+). The catalysed reaction is N(tele)-phospho-L-histidyl/O-phospho-L-threonyl-[pyruvate, phosphate dikinase] + phosphate + H(+) = N(tele)-phospho-L-histidyl/L-threonyl-[pyruvate, phosphate dikinase] + diphosphate. Its function is as follows. Bifunctional serine/threonine kinase and phosphorylase involved in the regulation of the pyruvate, phosphate dikinase (PPDK) by catalyzing its phosphorylation/dephosphorylation. This chain is Putative pyruvate, phosphate dikinase regulatory protein, found in Lactobacillus acidophilus (strain ATCC 700396 / NCK56 / N2 / NCFM).